We begin with the raw amino-acid sequence, 317 residues long: MEITFLGTSSGVPTRARNVSGVALRLPQRAEAWLFDCGEGTQHQLLRSDLRSSQISRIFITHMHGDHIFGLMGLIASMGLAGTGHPLEIYGPPGLEEYLRACEKYSYMRIGDRLRVHLVKPGLVFEDKEFQVTCLPLKHRVTAFGYRVTEKDRPGRFNLAKAQKLGIPPGPIYGDLKKGKVVTLDDGRKINGSDLCGQPEIGRKMVYCTDTVFCETAVELAQDADVLIHEATFAHKDAEMAFDRLHSTSTMAAQVALLAQVKQLIMTHFSPRYMPGNELTLDDLLAEAQAIFPKTIMAKDFLSYAIPRRKALAKSLH.

Residues histidine 62, histidine 64, aspartate 66, histidine 67, histidine 139, aspartate 210, and histidine 268 each coordinate Zn(2+). Aspartate 66 functions as the Proton acceptor in the catalytic mechanism.

Belongs to the RNase Z family. In terms of assembly, homodimer. The cofactor is Zn(2+).

It catalyses the reaction Endonucleolytic cleavage of RNA, removing extra 3' nucleotides from tRNA precursor, generating 3' termini of tRNAs. A 3'-hydroxy group is left at the tRNA terminus and a 5'-phosphoryl group is left at the trailer molecule.. Zinc phosphodiesterase, which displays some tRNA 3'-processing endonuclease activity. Probably involved in tRNA maturation, by removing a 3'-trailer from precursor tRNA. The protein is Ribonuclease Z of Picosynechococcus sp. (strain ATCC 27264 / PCC 7002 / PR-6) (Agmenellum quadruplicatum).